Here is a 307-residue protein sequence, read N- to C-terminus: MEFVFLGTGAGVPSKGRNVSAIALQLLEERGQTWLFDCGEATQHQILHTSVRPRRIEKIFITHLHGDHIFGLPGLLGSRSFQGGTTPLTVYGPKGIKQFIEVALSVSTTHVKYPLEIVEITEEGTVFEDNEFHVETKRLSHGIECFGYRIIEKDIQGALLVDKLLEIGVKPGPLFKRLKDGEVVELENGTILNGNDFIGPPQKGRVITILGDTRYCEASRELAQDADVLVHEATFAAEDEQQAYDYFHSTSKQAASIALQANAKRLILTHISSRYQGDTYKELLKEARELFSNTEIATDLKSFPVDR.

Zn(2+) contacts are provided by His63, His65, Asp67, His68, His141, Asp212, and His270. The active-site Proton acceptor is the Asp67.

It belongs to the RNase Z family. In terms of assembly, homodimer. The cofactor is Zn(2+).

It catalyses the reaction Endonucleolytic cleavage of RNA, removing extra 3' nucleotides from tRNA precursor, generating 3' termini of tRNAs. A 3'-hydroxy group is left at the tRNA terminus and a 5'-phosphoryl group is left at the trailer molecule.. Functionally, zinc phosphodiesterase, which displays some tRNA 3'-processing endonuclease activity. Probably involved in tRNA maturation, by removing a 3'-trailer from precursor tRNA. The protein is Ribonuclease Z of Bacillus anthracis (strain A0248).